Reading from the N-terminus, the 236-residue chain is Syntaxin-8 (236 aa).

The Cytoplasmic segment spans residues 1 to 215 (MAPDPWFSTY…LVDRKSTSCG (215 aa)). Positions 42–65 (VTIRALLQKLKEKIALLKDLLLRA) form a coiled coil. The t-SNARE coiled-coil homology domain maps to 145–207 (QKIIQEQDAG…RTETRRVNLV (63 aa)). Phosphoserine is present on Ser160. The chain crosses the membrane as a helical; Anchor for type IV membrane protein span at residues 216-232 (MIMVILLLLVAIVVVAV). The Vesicular segment spans residues 233–236 (WPTK).

The protein belongs to the syntaxin family. In terms of assembly, forms a SNARE complex with STX7, VTI1B and VAMP8 which functions in the homotypic fusion of late endosomes. Part of the SNARE core complex containing STX7, VAMP8 and VTI1B. Interacts with VAMP8. Interacts with HECTD3. Interacts with TPC1. In terms of processing, ubiquitinated by HECTD3.

It is found in the membrane. Functionally, vesicle trafficking protein that functions in the early secretory pathway, possibly by mediating retrograde transport from cis-Golgi membranes to the ER. This chain is Syntaxin-8 (STX8), found in Bos taurus (Bovine).